We begin with the raw amino-acid sequence, 87 residues long: MAHKKAGGSSRNGRDSQGQRRGVKRFGGQLVLAGNILIRQLGTKVHPGENVGMGRDYTLFAKVDGTVRYEKFTRKRKVLTRVHIDAV.

The interval 1 to 22 (MAHKKAGGSSRNGRDSQGQRRG) is disordered.

The protein belongs to the bacterial ribosomal protein bL27 family.

The chain is Large ribosomal subunit protein bL27 from Nitratidesulfovibrio vulgaris (strain DP4) (Desulfovibrio vulgaris).